A 95-amino-acid chain; its full sequence is Heteroscorpine-1 (95 aa).

The first 19 residues, 1-19, serve as a signal peptide directing secretion; sequence MNSKLTALIFLGLVAIASC. Residues 55–95 enclose the BetaSPN-type CS-alpha/beta domain; that stretch reads EFQCVANIDTMGNCETHCQKTSGEKGFCHGTKCKCGKPLSY. Disulfide bonds link Cys58–Cys82, Cys68–Cys87, and Cys72–Cys89.

Belongs to the long chain scorpion toxin family. Class 3 subfamily. Contains 3 disulfide bonds. In terms of tissue distribution, expressed by the venom gland.

It is found in the secreted. In terms of biological role, has antibacterial activity against B.subtilis, K.pneumoniae and P.aeruginosa. This is Heteroscorpine-1 from Heterometrus laoticus (Thai giant scorpion).